The following is a 370-amino-acid chain: Doublesex- and mab-3-related transcription factor C2 (370 aa).

The interval 1-38 (MDPSETAALHHCSADSSPADEARVPQSTELIPRRPVSR) is disordered. Residues 42-89 (CARCRNHGVTAHLKGHKRLCLFQACECHKCVLILERRRVMAAQVALRR) constitute a DNA-binding region (DM). A disordered region spans residues 334-356 (APPGGRGFQPVGPPLRPSPGSSV).

Belongs to the DMRT family. In terms of tissue distribution, expressed in testis. Highly expressed in ovary.

It localises to the nucleus. May be involved in sexual development. The polypeptide is Doublesex- and mab-3-related transcription factor C2 (Dmrtc2) (Mus musculus (Mouse)).